Consider the following 127-residue polypeptide: Large ribosomal subunit protein eL22x (127 aa).

It belongs to the eukaryotic ribosomal protein eL22 family.

This Arabidopsis thaliana (Mouse-ear cress) protein is Large ribosomal subunit protein eL22x (RPL22A).